The primary structure comprises 382 residues: Alkanesulfonate monooxygenase (382 aa).

Belongs to the SsuD family. In terms of assembly, homotetramer.

The enzyme catalyses an alkanesulfonate + FMNH2 + O2 = an aldehyde + FMN + sulfite + H2O + 2 H(+). Functionally, catalyzes the desulfonation of aliphatic sulfonates. This chain is Alkanesulfonate monooxygenase, found in Serratia proteamaculans (strain 568).